The sequence spans 176 residues: Large ribosomal subunit protein uL6 (176 aa).

Residues 151–170 (RPPEPYKGKGVRYADEQVRR) are compositionally biased toward basic and acidic residues. Positions 151–176 (RPPEPYKGKGVRYADEQVRRKEAKKK) are disordered.

Belongs to the universal ribosomal protein uL6 family. Part of the 50S ribosomal subunit.

This protein binds to the 23S rRNA, and is important in its secondary structure. It is located near the subunit interface in the base of the L7/L12 stalk, and near the tRNA binding site of the peptidyltransferase center. The sequence is that of Large ribosomal subunit protein uL6 from Shewanella loihica (strain ATCC BAA-1088 / PV-4).